Here is a 148-residue protein sequence, read N- to C-terminus: Lysozyme C, non-stomach isozyme (148 aa).

A signal peptide spans 1-18; it reads MKALLILGLLLFSVAVQG. One can recognise a C-type lysozyme domain in the interval 19-148; the sequence is KVFERCELAR…LTSYIQGCGV (130 aa). Intrachain disulfides connect Cys-24/Cys-146, Cys-48/Cys-134, Cys-83/Cys-99, and Cys-95/Cys-113. Catalysis depends on residues Glu-53 and Asp-71.

Belongs to the glycosyl hydrolase 22 family. As to expression, expressed in blood cells.

The catalysed reaction is Hydrolysis of (1-&gt;4)-beta-linkages between N-acetylmuramic acid and N-acetyl-D-glucosamine residues in a peptidoglycan and between N-acetyl-D-glucosamine residues in chitodextrins.. Functionally, lysozymes have primarily a bacteriolytic function; those in tissues and body fluids are associated with the monocyte-macrophage system and enhance the activity of immunoagents. The protein is Lysozyme C, non-stomach isozyme (LYS) of Bos taurus (Bovine).